Consider the following 492-residue polypeptide: Phytoene desaturase (lycopene-forming) (492 aa).

5-38 lines the FAD pocket; the sequence is TVIGAGFGGLALAIRLQAAGIPVLLLEQRDKPGG.

The protein belongs to the carotenoid/retinoid oxidoreductase family. FAD is required as a cofactor.

The protein resides in the cell membrane. It carries out the reaction 15-cis-phytoene + 4 A = all-trans-lycopene + 4 AH2. It functions in the pathway carotenoid biosynthesis; lycopene biosynthesis. Its activity is regulated as follows. Inhibited by NAD and NADP. In terms of biological role, converts 15-cis-phytoene into all-trans-lycopene via the intermediary of all-trans-phytofluene, all-trans-zeta-carotene and all-trans-neurosporene, by the introduction of four double bonds. This chain is Phytoene desaturase (lycopene-forming) (crtI), found in Pantoea ananas (Erwinia uredovora).